The chain runs to 392 residues: Tryptophan synthase beta chain (392 aa).

K86 bears the N6-(pyridoxal phosphate)lysine mark.

This sequence belongs to the TrpB family. Tetramer of two alpha and two beta chains. Requires pyridoxal 5'-phosphate as cofactor.

It catalyses the reaction (1S,2R)-1-C-(indol-3-yl)glycerol 3-phosphate + L-serine = D-glyceraldehyde 3-phosphate + L-tryptophan + H2O. Its pathway is amino-acid biosynthesis; L-tryptophan biosynthesis; L-tryptophan from chorismate: step 5/5. The beta subunit is responsible for the synthesis of L-tryptophan from indole and L-serine. In Methanocorpusculum labreanum (strain ATCC 43576 / DSM 4855 / Z), this protein is Tryptophan synthase beta chain.